The chain runs to 596 residues: Fructan 1-exohydrolase (596 aa).

The N-terminal stretch at 1–20 is a signal peptide; that stretch reads MAQAWAFLLPVLVLGSYVTS. Asp75 is a catalytic residue. Residues Asn168, Asn236, and Asn248 are each glycosylated (N-linked (GlcNAc...) asparagine). Cys446 and Cys492 form a disulfide bridge. N-linked (GlcNAc...) asparagine glycosylation occurs at Asn567.

This sequence belongs to the glycosyl hydrolase 32 family.

It carries out the reaction Hydrolysis of terminal, non-reducing (2-&gt;1)-linked beta-D-fructofuranose residues in fructans.. With respect to regulation, inhibited by sucrose. Its function is as follows. Hydrolyzes inulin-type beta-(2,1)-fructans. May play a role as a beta-(2,1)-trimmer during graminan biosynthesis. This chain is Fructan 1-exohydrolase, found in Aegilops tauschii (Tausch's goatgrass).